A 383-amino-acid chain; its full sequence is ATP phosphoribosyltransferase regulatory subunit (383 aa).

It belongs to the class-II aminoacyl-tRNA synthetase family. HisZ subfamily. Heteromultimer composed of HisG and HisZ subunits.

The protein localises to the cytoplasm. It participates in amino-acid biosynthesis; L-histidine biosynthesis; L-histidine from 5-phospho-alpha-D-ribose 1-diphosphate: step 1/9. Functionally, required for the first step of histidine biosynthesis. May allow the feedback regulation of ATP phosphoribosyltransferase activity by histidine. This is ATP phosphoribosyltransferase regulatory subunit from Paraburkholderia phytofirmans (strain DSM 17436 / LMG 22146 / PsJN) (Burkholderia phytofirmans).